The primary structure comprises 1339 residues: Receptor tyrosine-protein kinase erbB-3 (1339 aa).

A signal peptide spans 1 to 19; that stretch reads MRATGTLQVLCFLLSLARG. Over 20–643 the chain is Extracellular; the sequence is SEMGNSQAVC…EVLMSKPHLV (624 aa). Asn126 is a glycosylation site (N-linked (GlcNAc...) asparagine). 11 cysteine pairs are disulfide-bonded: Cys186–Cys194, Cys190–Cys202, Cys210–Cys218, Cys214–Cys226, Cys227–Cys235, Cys231–Cys243, Cys246–Cys255, Cys259–Cys286, Cys290–Cys301, Cys305–Cys320, and Cys323–Cys327. Asn250 is a glycosylation site (N-linked (GlcNAc...) asparagine). Asn353, Asn408, Asn414, Asn437, and Asn469 each carry an N-linked (GlcNAc...) asparagine glycan. 10 cysteine pairs are disulfide-bonded: Cys500/Cys509, Cys504/Cys517, Cys520/Cys529, Cys533/Cys549, Cys552/Cys565, Cys556/Cys573, Cys576/Cys585, Cys589/Cys610, Cys613/Cys621, and Cys617/Cys629. A glycan (N-linked (GlcNAc...) asparagine) is linked at Asn522. Asn566 is a glycosylation site (N-linked (GlcNAc...) asparagine). The N-linked (GlcNAc...) asparagine glycan is linked to Asn616. Residues 644–662 traverse the membrane as a helical segment; it reads IAVTVGLAVILMILGGSFL. Residues 663-1339 lie on the Cytoplasmic side of the membrane; it reads YWRGRRIQNK…LFPKANAQRT (677 aa). Ser684 bears the Phosphoserine mark. In terms of domain architecture, Protein kinase spans 707-964; it reads LRKLKVLGSG…TFKELANEFT (258 aa). ATP is bound by residues 713–721, Lys740, 786–788, and 832–837; these read LGSGVFGTV, QYL, and DLALRN. The Proton acceptor role is filled by Asp832. A Phosphoserine modification is found at Ser980. Over residues 1023-1036 the composition is skewed to low complexity; sequence SLGSALSLPTGTLT. Disordered regions lie at residues 1023–1052 and 1078–1215; these read SLGS…SGYM and PISL…GSLE. Residues 1039–1052 show a composition bias toward polar residues; the sequence is RGSQSLLSPSSGYM. A compositionally biased stretch (low complexity) spans 1172-1184; that stretch reads GTLSSVGLSSVLG. Over residues 1185-1195 the composition is skewed to acidic residues; the sequence is TEEEDEDEEYE.

The protein belongs to the protein kinase superfamily. Tyr protein kinase family. EGF receptor subfamily. Monomer and homodimer. Heterodimer with each of the other ERBB receptors (Potential). Interacts with CSPG5, PA2G4, GRB7, MYOC and MUC1. Found in a ternary complex with NRG1 and ITGAV:ITGB3 or ITGA6:ITGB4. Autophosphorylated. Ligand-binding increases phosphorylation on tyrosine residues and promotes its association with the p85 subunit of phosphatidylinositol 3-kinase.

It localises to the membrane. The catalysed reaction is L-tyrosyl-[protein] + ATP = O-phospho-L-tyrosyl-[protein] + ADP + H(+). Its function is as follows. Tyrosine-protein kinase that plays an essential role as cell surface receptor for neuregulins. Binds to neuregulin-1 (NRG1) and is activated by it; ligand-binding increases phosphorylation on tyrosine residues and promotes its association with the p85 subunit of phosphatidylinositol 3-kinase. May also be activated by CSPG5. Involved in the regulation of myeloid cell differentiation. This is Receptor tyrosine-protein kinase erbB-3 (Erbb3) from Rattus norvegicus (Rat).